An 878-amino-acid chain; its full sequence is Alanine--tRNA ligase (878 aa).

Zn(2+) is bound by residues His-566, His-570, Cys-668, and His-672.

Belongs to the class-II aminoacyl-tRNA synthetase family. Requires Zn(2+) as cofactor.

Its subcellular location is the cytoplasm. The catalysed reaction is tRNA(Ala) + L-alanine + ATP = L-alanyl-tRNA(Ala) + AMP + diphosphate. Catalyzes the attachment of alanine to tRNA(Ala) in a two-step reaction: alanine is first activated by ATP to form Ala-AMP and then transferred to the acceptor end of tRNA(Ala). Also edits incorrectly charged Ser-tRNA(Ala) and Gly-tRNA(Ala) via its editing domain. This Geobacillus thermodenitrificans (strain NG80-2) protein is Alanine--tRNA ligase.